A 42-amino-acid polypeptide reads, in one-letter code: Photosystem I reaction center subunit IX (42 aa).

Residues Y7 to I27 traverse the membrane as a helical segment.

It belongs to the PsaJ family.

Its subcellular location is the plastid. It localises to the chloroplast thylakoid membrane. Functionally, may help in the organization of the PsaE and PsaF subunits. The chain is Photosystem I reaction center subunit IX from Staurastrum punctulatum (Green alga).